A 226-amino-acid chain; its full sequence is ATP-dependent dethiobiotin synthetase BioD (226 aa).

12-17 (GVGKTV) provides a ligand contact to ATP. Position 16 (threonine 16) interacts with Mg(2+). The active site involves lysine 37. Residue threonine 41 participates in substrate binding. Residues aspartate 49, 108–111 (EGAG), 169–170 (GS), and 197–199 (PAG) each bind ATP. Mg(2+) is bound by residues aspartate 49 and glutamate 108.

The protein belongs to the dethiobiotin synthetase family. In terms of assembly, homodimer. It depends on Mg(2+) as a cofactor.

It localises to the cytoplasm. It catalyses the reaction (7R,8S)-7,8-diammoniononanoate + CO2 + ATP = (4R,5S)-dethiobiotin + ADP + phosphate + 3 H(+). Its pathway is cofactor biosynthesis; biotin biosynthesis; biotin from 7,8-diaminononanoate: step 1/2. Functionally, catalyzes a mechanistically unusual reaction, the ATP-dependent insertion of CO2 between the N7 and N8 nitrogen atoms of 7,8-diaminopelargonic acid (DAPA, also called 7,8-diammoniononanoate) to form a ureido ring. The polypeptide is ATP-dependent dethiobiotin synthetase BioD (Mycobacterium bovis (strain BCG / Pasteur 1173P2)).